The sequence spans 734 residues: Adhesion G protein-coupled receptor E5 (734 aa).

A signal peptide spans 1–26 (MGGPHGGPFLLFHVLCFLLTLSEVGS). At 27–449 (QNSKACALPC…VEDPKLALIT (423 aa)) the chain is on the extracellular side. The EGF-like 1 domain maps to 28 to 70 (NSKACALPCPPNSSCVNGTACRCAPGFISFSGEIFTDPLESCD). 9 disulfides stabilise this stretch: cysteine 32–cysteine 42, cysteine 36–cysteine 48, cysteine 50–cysteine 69, cysteine 75–cysteine 89, cysteine 83–cysteine 98, cysteine 100–cysteine 121, cysteine 127–cysteine 140, cysteine 134–cysteine 149, and cysteine 151–cysteine 170. N-linked (GlcNAc...) asparagine glycans are attached at residues asparagine 39 and asparagine 44. The EGF-like 2; calcium-binding domain maps to 71–122 (DINECGPPSPVDCGSSADCQNTEGGYYCTCSPGYEPVSGAMIFRNESENTCR). Asparagine 115 and asparagine 136 each carry an N-linked (GlcNAc...) asparagine glycan. Residues 123–171 (DVDECSSGQHQCHNSTVCFNTVGSYTCHCREGWEPKHGLKNKQKDTICK) enclose the EGF-like 3; calcium-binding domain. One can recognise a GAIN-B domain in the interval 265–441 (TYRSLDNTEL…AILMAHYDVE (177 aa)). N-linked (GlcNAc...) asparagine glycosylation is found at asparagine 285, asparagine 327, asparagine 372, asparagine 403, and asparagine 418. Cystine bridges form between cysteine 393-cysteine 423 and cysteine 411-cysteine 425. Positions 393–441 (CAFWKKDSNGNGSWATTGCWKMGRGNGSITCQCSHLSSFAILMAHYDVE) are GPS. The chain crosses the membrane as a helical span at residues 450-470 (KVGLALSLACLLLCILTFLLV). Residues 471-478 (RPIQGSRT) are Cytoplasmic-facing. A helical membrane pass occupies residues 479 to 499 (TVHLHLCICLFVGSAIFLAGI). Residues 500 to 519 (ENEGGEVGTRCRLVAVLLHY) lie on the Extracellular side of the membrane. Residues 520–540 (CFLAAFCWMSLEGVELYFLVV) form a helical membrane-spanning segment. At 541-550 (RVFQGQGMRK) the chain is on the cytoplasmic side. Residues 551–571 (LWLCLIGYGVPLIIVGISAGA) traverse the membrane as a helical segment. Residues 572–593 (YSKGYGREKFCWLNFEGGFLWS) are Extracellular-facing. A helical membrane pass occupies residues 594-614 (FVGPVTFIVLGNAIIFVITVW). The Cytoplasmic portion of the chain corresponds to 615-637 (KLTQKFSEINPDIKKLKKARVLT). The chain crosses the membrane as a helical span at residues 638-658 (ITAIAQLFVLGCTWVFGLLLF). The Extracellular portion of the chain corresponds to 659-662 (NPES). The helical transmembrane segment at 663 to 683 (WVLSYIFSILNCLQGFFLFVL) threads the bilayer. Residues 684–734 (YCLLNKKVREEYRKWACMVAGNKYSEFATTTSGSGSSHNQTQALRPSESGM) lie on the Cytoplasmic side of the membrane. A disordered region spans residues 712–734 (TTTSGSGSSHNQTQALRPSESGM). The residue at position 713 (threonine 713) is a Phosphothreonine. Serine 715 carries the phosphoserine modification. At threonine 724 the chain carries Phosphothreonine. 2 positions are modified to phosphoserine: serine 730 and serine 732.

It belongs to the G-protein coupled receptor 2 family. LN-TM7 subfamily. As to quaternary structure, forms a heterodimer, consisting of a large extracellular region (alpha subunit) non-covalently linked to a seven-transmembrane moiety (beta subunit). Interacts with complement decay-accelerating factor (DAF) and with chondroitin sulfate. In terms of processing, proteolytically cleaved into 2 subunits, an extracellular alpha subunit and a seven-transmembrane subunit.

The protein localises to the cell membrane. The protein resides in the secreted. It is found in the extracellular space. Functionally, receptor potentially involved in both adhesion and signaling processes early after leukocyte activation. Plays an essential role in leukocyte migration. This Bos taurus (Bovine) protein is Adhesion G protein-coupled receptor E5.